Consider the following 475-residue polypeptide: ATP synthase subunit beta (475 aa).

An ATP-binding site is contributed by Gly-152–Thr-159.

Belongs to the ATPase alpha/beta chains family. As to quaternary structure, F-type ATPases have 2 components, CF(1) - the catalytic core - and CF(0) - the membrane proton channel. CF(1) has five subunits: alpha(3), beta(3), gamma(1), delta(1), epsilon(1). CF(0) has three main subunits: a(1), b(2) and c(9-12). The alpha and beta chains form an alternating ring which encloses part of the gamma chain. CF(1) is attached to CF(0) by a central stalk formed by the gamma and epsilon chains, while a peripheral stalk is formed by the delta and b chains.

The protein localises to the cell membrane. The enzyme catalyses ATP + H2O + 4 H(+)(in) = ADP + phosphate + 5 H(+)(out). Functionally, produces ATP from ADP in the presence of a proton gradient across the membrane. The catalytic sites are hosted primarily by the beta subunits. This Wolbachia pipientis wMel protein is ATP synthase subunit beta.